We begin with the raw amino-acid sequence, 36 residues long: Pancreatic polypeptide (36 aa).

Tyr-36 bears the Tyrosine amide mark.

It belongs to the NPY family.

It is found in the secreted. Its function is as follows. Hormone secreted by pancreatic cells that acts as a regulator of pancreatic and gastrointestinal functions probably by signaling through the G protein-coupled receptor NPY4R2. This chain is Pancreatic polypeptide (PPY), found in Oryctolagus cuniculus (Rabbit).